We begin with the raw amino-acid sequence, 282 residues long: Protein OS-9 homolog (282 aa).

An N-terminal signal peptide occupies residues 1-23 (MRITQILLCLVIVALSSSSHVWS). N-linked (GlcNAc...) asparagine glycosylation occurs at Asn94. The MRH domain occupies 120–239 (EKCLFRQEGW…TVQCPTLCKH (120 aa)). Cys122 and Cys135 form a disulfide bridge. A mannooligosaccharide derivative is bound by residues Trp129, Trp130, and Gln142. N-linked (GlcNAc...) asparagine glycosylation is found at Asn169 and Asn190. Cystine bridges form between Cys194–Cys225 and Cys209–Cys237. A mannooligosaccharide derivative-binding residues include Asp195, Arg201, Glu221, and Tyr227. The segment covering 262 to 276 (DATRNKEEQAVDESP) has biased composition (basic and acidic residues). A disordered region spans residues 262–282 (DATRNKEEQAVDESPKMIADS).

This sequence belongs to the OS-9 family. Interacts with HRD3A.

It localises to the endoplasmic reticulum. Its function is as follows. Lectin which functions in endoplasmic reticulum (ER) quality control and ER-associated degradation (ERAD). May bind terminally misfolded non-glycosylated proteins as well as improperly folded glycoproteins, retain them in the ER, and possibly transfer them to the ubiquitination machinery and promote their degradation. Targets the misfolded LRR receptor kinase BRI1 and the misfolded receptor-like kinase EFR. The polypeptide is Protein OS-9 homolog (Arabidopsis thaliana (Mouse-ear cress)).